The following is a 47-amino-acid chain: Defensin-like protein 1 (47 aa).

Intrachain disulfides connect Cys-3–Cys-47, Cys-14–Cys-34, Cys-20–Cys-41, and Cys-24–Cys-43.

In terms of assembly, monomer and homodimer.

Its function is as follows. Inhibits trypsin but not chymotrypsin. This is Defensin-like protein 1 from Vigna unguiculata (Cowpea).